Here is a 452-residue protein sequence, read N- to C-terminus: Friend leukemia integration 1 transcription factor (452 aa).

S39 carries the post-translational modification Phosphoserine. Positions 112–198 (PPPPNMTTNE…SHLTYLRESS (87 aa)) constitute a PNT domain. A compositionally biased stretch (polar residues) spans 202–214 (YNTTSHTDPSSRL). A disordered region spans residues 202-272 (YNTTSHTDPS…YQILGPTSSR (71 aa)). The segment covering 215 to 226 (NVKEDPSYDSVR) has biased composition (basic and acidic residues). Residues 248–257 (QTMSKNTEQR) show a composition bias toward polar residues. Residues 281 to 361 (IQLWQFLLEL…HGKRYAYKFD (81 aa)) constitute a DNA-binding region (ETS).

Belongs to the ETS family. Can form homodimers or heterodimers with ETV6/TEL1.

It localises to the nucleus. Sequence-specific transcriptional activator. Recognizes the DNA sequence 5'-C[CA]GGAAGT-3'. The sequence is that of Friend leukemia integration 1 transcription factor (FLI1) from Bos taurus (Bovine).